The chain runs to 420 residues: Sodium/proton antiporter 2 (420 aa).

The next 11 membrane-spanning stretches (helical) occupy residues 25–45, 60–80, 94–114, 136–156, 173–193, 221–241, 242–262, 285–305, 321–341, 363–383, and 400–420; these read IALL…SVEI, IVFY…HQGF, ILLW…DNLT, LGAV…IGDV, IKNL…LMSL, LVFG…SLTG, LPPY…TDVI, GALF…AGIL, LIAS…LVAA, FCAG…VIFM, and FAFA…NFPL.

The protein belongs to the NhaD Na(+)/H(+) (TC 2.A.62) antiporter family.

Its subcellular location is the membrane. Functionally, na(+)/H(+) antiporter that extrudes sodium in exchange for external protons. This Arabidopsis thaliana (Mouse-ear cress) protein is Sodium/proton antiporter 2.